Reading from the N-terminus, the 447-residue chain is Voltage-gated purine nucleotide uniporter SLC17A9 (447 aa).

The segment at 1–26 (MPSQRSSLMQPIPEETRKTPSAAAED) is disordered. The next 11 helical transmembrane spans lie at 40–60 (ILLLGTCLLYCARVTMPVCTV), 74–94 (GIVLSSFFWGYCLTQVVGGHL), 103–123 (VILLSASAWGFITVTTPLLAH), 129–149 (LAFLTFSRILTGLLQGVYFPA), 169–189 (TVGAGSQVGTLVTGGVGSVLL), 192–212 (CGWQSVFYFSGGLTLLWAYYV), 252–272 (VWAAICSQLCSACSFFILLSW), 287–307 (WVFNVVPWMLAIPASLFSGFI), 327–347 (VMGLGLSSIFALCLGHTTSFL), 380–400 (GFLFGVANTAGALAGVVGVCL), and 413–433 (CVFHLVAIISNLGLGTFLVFG).

This sequence belongs to the major facilitator superfamily. Sodium/anion cotransporter family. In terms of tissue distribution, in brain, specifically expressed in the medulla and is associated with chromaffin granules (at protein level). Predominantly expressed in adrenal gland, brain and thyroid.

It is found in the cytoplasmic vesicle. The protein resides in the secretory vesicle. It localises to the chromaffin granule membrane. Its subcellular location is the secretory vesicle membrane. The protein localises to the lysosome membrane. The catalysed reaction is ATP(in) = ATP(out). It carries out the reaction ADP(in) = ADP(out). It catalyses the reaction GTP(in) = GTP(out). Its activity is regulated as follows. Activity is chloride-dependent. Voltage-gated ATP nucleotide uniporter that can also transport the purine nucleotides ADP and GTP. Uses the membrane potential as the driving force to control ATP accumulation in lysosomes and secretory vesicles. By controlling ATP storage in lysosomes, regulates ATP-dependent proteins of these organelles. Also indirectly regulates the exocytosis of ATP through its import into lysosomes in astrocytes and secretory vesicles such as adrenal chromaffin granules, mucin granules and synaptic vesicles. This Mus musculus (Mouse) protein is Voltage-gated purine nucleotide uniporter SLC17A9.